Here is a 431-residue protein sequence, read N- to C-terminus: Ribosomal RNA small subunit methyltransferase B (431 aa).

S-adenosyl-L-methionine-binding positions include 254 to 260 (CAAPGGK), aspartate 277, aspartate 303, and aspartate 322. Catalysis depends on cysteine 375, which acts as the Nucleophile.

The protein belongs to the class I-like SAM-binding methyltransferase superfamily. RsmB/NOP family.

It localises to the cytoplasm. It catalyses the reaction cytidine(967) in 16S rRNA + S-adenosyl-L-methionine = 5-methylcytidine(967) in 16S rRNA + S-adenosyl-L-homocysteine + H(+). Specifically methylates the cytosine at position 967 (m5C967) of 16S rRNA. In Klebsiella pneumoniae subsp. pneumoniae (strain ATCC 700721 / MGH 78578), this protein is Ribosomal RNA small subunit methyltransferase B.